A 168-amino-acid chain; its full sequence is Photosystem I assembly protein Ycf3 (168 aa).

TPR repeat units follow at residues 29 to 62, 66 to 99, and 117 to 150; these read AFSYYRAGMSAQSKGRYAEALQNYYEALQVEEDP, SYTLYNIGLIYGNTGKYTQALEFYHQALSLNANL, and AQSLEEDEYIELSKELFDKAAEYWIQALKLAPDN.

The protein belongs to the Ycf3 family.

It is found in the plastid. Its subcellular location is the chloroplast thylakoid membrane. In terms of biological role, essential for the assembly of the photosystem I (PSI) complex. May act as a chaperone-like factor to guide the assembly of the PSI subunits. This is Photosystem I assembly protein Ycf3 from Phaeodactylum tricornutum (strain CCAP 1055/1).